Here is a 397-residue protein sequence, read N- to C-terminus: Lipoyl synthase 2, chloroplastic (397 aa).

The transit peptide at 1-35 (MIEQSLSKPSFSLSIPIPKAPKSKSSFFCSYSKIR) directs the protein to the chloroplast. Positions 49–85 (AKHPQNSTTINNGSSSSASVDLKNNEKGPYPYPGGGK) are disordered. Low complexity predominate over residues 54–67 (NSTTINNGSSSSAS). [4Fe-4S] cluster is bound by residues Cys-128, Cys-133, Cys-139, Cys-159, Cys-163, Cys-166, and Ser-374. The Radical SAM core domain occupies 142-363 (GGGDGIATAT…KEYGESIGFR (222 aa)).

The protein belongs to the radical SAM superfamily. Lipoyl synthase family. It depends on [4Fe-4S] cluster as a cofactor.

The protein resides in the plastid. It localises to the chloroplast. It carries out the reaction [[Fe-S] cluster scaffold protein carrying a second [4Fe-4S](2+) cluster] + N(6)-octanoyl-L-lysyl-[protein] + 2 oxidized [2Fe-2S]-[ferredoxin] + 2 S-adenosyl-L-methionine + 4 H(+) = [[Fe-S] cluster scaffold protein] + N(6)-[(R)-dihydrolipoyl]-L-lysyl-[protein] + 4 Fe(3+) + 2 hydrogen sulfide + 2 5'-deoxyadenosine + 2 L-methionine + 2 reduced [2Fe-2S]-[ferredoxin]. Its pathway is protein modification; protein lipoylation via endogenous pathway; protein N(6)-(lipoyl)lysine from octanoyl-[acyl-carrier-protein]: step 2/2. Its function is as follows. Catalyzes the radical-mediated insertion of two sulfur atoms into the C-6 and C-8 positions of the octanoyl moiety bound to the lipoyl domains of lipoate-dependent enzymes, thereby converting the octanoylated domains into lipoylated derivatives. The sequence is that of Lipoyl synthase 2, chloroplastic from Populus trichocarpa (Western balsam poplar).